Reading from the N-terminus, the 506-residue chain is Cysteine--tRNA ligase (506 aa).

Position 34 (Cys34) interacts with Zn(2+). A 'HIGH' region motif is present at residues 36-46; that stretch reads PTVYDFAHIGN. Zn(2+) contacts are provided by Cys230, His269, and Glu273. The 'KMSKS' region motif lies at 302-306; the sequence is KMSKS. An ATP-binding site is contributed by Lys305.

It belongs to the class-I aminoacyl-tRNA synthetase family. Monomer. It depends on Zn(2+) as a cofactor.

The protein resides in the cytoplasm. The catalysed reaction is tRNA(Cys) + L-cysteine + ATP = L-cysteinyl-tRNA(Cys) + AMP + diphosphate. The protein is Cysteine--tRNA ligase of Brucella suis (strain ATCC 23445 / NCTC 10510).